Consider the following 368-residue polypeptide: Phenylalanine--tRNA ligase alpha subunit (368 aa).

Glu268 lines the Mg(2+) pocket.

This sequence belongs to the class-II aminoacyl-tRNA synthetase family. Phe-tRNA synthetase alpha subunit type 1 subfamily. As to quaternary structure, tetramer of two alpha and two beta subunits. Mg(2+) serves as cofactor.

The protein localises to the cytoplasm. It catalyses the reaction tRNA(Phe) + L-phenylalanine + ATP = L-phenylalanyl-tRNA(Phe) + AMP + diphosphate + H(+). This is Phenylalanine--tRNA ligase alpha subunit from Nitrobacter hamburgensis (strain DSM 10229 / NCIMB 13809 / X14).